The sequence spans 409 residues: tRNA (guanine-N(7)-)-methyltransferase non-catalytic subunit wuho (409 aa).

Residues 48–72 (DADSDSDEESTQQPQKPPTNGNGTA) are disordered. Positions 58 to 72 (TQQPQKPPTNGNGTA) are enriched in polar residues. 4 WD repeats span residues 72–111 (ADNV…DETN), 122–161 (MVSR…CKKP), 167–206 (GHMS…SIET), and 210–252 (GHGE…EVAR).

Belongs to the WD repeat TRM82 family. In terms of assembly, forms a heterodimer with the catalytic subunit.

It is found in the nucleus. It participates in tRNA modification; N(7)-methylguanine-tRNA biosynthesis. Its function is as follows. Required for the formation of N(7)-methylguanine at position 46 (m7G46) in tRNA. In the complex, it is required to stabilize and induce conformational changes of the catalytic subunit. The sequence is that of tRNA (guanine-N(7)-)-methyltransferase non-catalytic subunit wuho from Aedes aegypti (Yellowfever mosquito).